Here is a 334-residue protein sequence, read N- to C-terminus: Protein CUP-SHAPED COTYLEDON 3 (334 aa).

An NAC domain is found at 22-171 (LPPGFRFHPT…EWVICRVFNK (150 aa)). Residues 121-177 (VGMKKTLVFYKGRAPRGLKTKWVMHEYRLENDHSHRHTCKEEWVICRVFNKTGDRKN) mediate DNA binding.

In a general manner, present at the boundaries between mersitems and araising primordia.

The protein localises to the nucleus. Functionally, transcription activator. Involved in molecular mechanisms regulating shoot apical meristem (SAM) formation during embryogenesis and organ separation. Required for axillary meristem initiation and separation of the meristem from the main stem. May act as an inhibitor of cell division. This chain is Protein CUP-SHAPED COTYLEDON 3 (NAC031), found in Arabidopsis thaliana (Mouse-ear cress).